Consider the following 545-residue polypeptide: 4-coumarate--CoA ligase 2 (545 aa).

6 residues coordinate ATP: S192, S193, G194, T195, T196, and K200. (E)-4-coumaroyl-AMP contacts are provided by Y242 and S246. K263 contacts CoA. Residues 265–334 (DIAQFLELIP…AKFPNAKLGQ (70 aa)) are SBD1. The (E)-4-coumaroyl-AMP site is built by A312, Q334, G335, T339, and M347. Q334, G335, and T339 together coordinate ATP. The interval 335–402 (GYGMTEAGPV…IRGDQIMKGY (68 aa)) is SBD2. 2 residues coordinate ATP: D423 and R438. 2 residues coordinate (E)-4-coumaroyl-AMP: K440 and K444. The CoA site is built by K446 and G447. K529 serves as a coordination point for ATP.

It belongs to the ATP-dependent AMP-binding enzyme family. The cofactor is Mg(2+).

It catalyses the reaction (E)-4-coumarate + ATP + CoA = (E)-4-coumaroyl-CoA + AMP + diphosphate. It carries out the reaction (E)-4-coumarate + ATP + H(+) = (E)-4-coumaroyl-AMP + diphosphate. The catalysed reaction is (E)-4-coumaroyl-AMP + CoA = (E)-4-coumaroyl-CoA + AMP + H(+). Its pathway is phytoalexin biosynthesis; 3,4',5-trihydroxystilbene biosynthesis; 3,4',5-trihydroxystilbene from trans-4-coumarate: step 1/2. In terms of biological role, carboxylate--CoA ligase that may use 4-coumarate as substrate. Follows a two-step reaction mechanism, wherein the carboxylate substrate first undergoes adenylation by ATP, followed by a thioesterification in the presence of CoA to yield the final CoA thioester. The sequence is that of 4-coumarate--CoA ligase 2 (4CL2) from Solanum tuberosum (Potato).